We begin with the raw amino-acid sequence, 499 residues long: Glucose-6-phosphate isomerase (499 aa).

The Proton donor role is filled by Glu-352. Residues His-383 and Lys-487 contribute to the active site.

This sequence belongs to the GPI family.

The protein resides in the cytoplasm. The enzyme catalyses alpha-D-glucose 6-phosphate = beta-D-fructose 6-phosphate. It participates in carbohydrate biosynthesis; gluconeogenesis. The protein operates within carbohydrate degradation; glycolysis; D-glyceraldehyde 3-phosphate and glycerone phosphate from D-glucose: step 2/4. Catalyzes the reversible isomerization of glucose-6-phosphate to fructose-6-phosphate. In Legionella pneumophila (strain Lens), this protein is Glucose-6-phosphate isomerase.